Consider the following 1304-residue polypeptide: Splicing factor 3B subunit 1 (1304 aa).

Disordered stretches follow at residues 100–119 (QYDP…EDEY) and 124–148 (RTMI…PKMN). Over residues 104 to 119 (FAEHRPPKIADREDEY) the composition is skewed to basic and acidic residues. Position 125 is a phosphothreonine (Thr-125). Ser-129 carries the phosphoserine modification. Lys-141 is modified (N6-acetyllysine). Thr-142 is subject to Phosphothreonine. Citrulline is present on Arg-157. Positions 172–360 (LAEKAKAGEL…PVLTPGKTPI (189 aa)) are disordered. A Phosphoserine modification is found at Ser-194. 3 positions are modified to phosphothreonine: Thr-203, Thr-207, and Thr-211. Lys-214 carries the N6-acetyllysine; alternate modification. Lys-214 participates in a covalent cross-link: Glycyl lysine isopeptide (Lys-Gly) (interchain with G-Cter in SUMO2); alternate. 2 positions are modified to phosphothreonine: Thr-223 and Thr-227. The segment at 223-491 (TPGHTPSLRW…VDESTLSPEE (269 aa)) is interaction with PPP1R8. The residue at position 229 (Ser-229) is a Phosphoserine. The segment covering 231 to 241 (RWDETPGRAKG) has biased composition (basic and acidic residues). Thr-235, Thr-244, Thr-248, Thr-257, Thr-261, Thr-267, Thr-273, and Thr-278 each carry phosphothreonine. Ser-287 bears the Phosphoserine mark. The span at 291–304 (NRWDETPKTERDTP) shows a compositional bias: basic and acidic residues. A phosphothreonine mark is found at Thr-296, Thr-299, Thr-303, and Thr-313. At Ser-322 the chain carries Phosphoserine. Phosphothreonine occurs at positions 326 and 328. At Ser-332 the chain carries Phosphoserine. Residue Thr-341 is modified to Phosphothreonine. Over residues 342–352 (PASQMGGSTPV) the composition is skewed to polar residues. 2 positions are modified to phosphoserine: Ser-344 and Ser-349. Phosphothreonine is present on residues Thr-350 and Thr-354. Phosphoserine is present on Ser-400. Lys-413 is covalently cross-linked (Glycyl lysine isopeptide (Lys-Gly) (interchain with G-Cter in SUMO2); alternate). Residue Lys-413 forms a Glycyl lysine isopeptide (Lys-Gly) (interchain with G-Cter in SUMO1); alternate linkage. Phosphothreonine is present on Thr-426. A Glycyl lysine isopeptide (Lys-Gly) (interchain with G-Cter in SUMO2) cross-link involves residue Lys-430. Thr-434 is subject to Phosphothreonine; by DYRK1A. Thr-436 is subject to Phosphothreonine. Phosphoserine is present on Ser-488. HEAT repeat units lie at residues 529–568 (GPLF…DLVR), 569–603 (PYVH…LAKA), 604–641 (AGLA…ALGI), 643–677 (SLLP…LMGC), 680–718 (LPHL…AATP), 763–801 (NYYT…TDGV), 843–881 (KVGA…NLGA), 1010–1048 (TPPI…RGAE), 1052–1090 (AREW…AIGP), 1122–1160 (TCSP…YIGE), and 1163–1201 (KDYI…GVYG). Residues 547–550 (QERH) form an interaction with PHF5A region. N6-acetyllysine is present on residues Lys-554 and Lys-562. Positions 1156-1157 (EY) are interaction with PHF5A. Residues 1248 to 1304 (QYCLQGLFHPARKVRDVYWKIYNSIYIGSQDALIAHYPRIYNDDKNTYIRYDLDYIL) are interaction with SF3B3 and SF3B5.

It belongs to the SF3B1 family. As to quaternary structure, component of the 17S U2 SnRNP complex, a ribonucleoprotein complex that contains small nuclear RNA (snRNA) U2 and a number of specific proteins. Part of the SF3B subcomplex of the 17S U2 SnRNP complex. SF3B associates with the splicing subcomplex SF3A and a 12S RNA unit to form the U2 small nuclear ribonucleoproteins complex (U2 snRNP). Within the SF3B complex, interacts directly (via HEAT domain) with SF3B3, SF3B5, SF3B6 and (via HEAT domain) with PHF5A. The SF3B subcomplex interacts with U2AF2. Identified in the spliceosome C complex. Component of the minor (U12-type spliceosome) spliceosome. Within the minor spliceosome complex, interacts with SCNM1 and CRIPT. Component of the B-WICH complex, at least composed of SMARCA5/SNF2H, BAZ1B/WSTF, SF3B1, DEK, MYO1C, ERCC6, MYBBP1A and DDX21. Phosphorylated form interacts with PPP1R8. Interacts with PQBP1. Interacts with RBM17. Interacts with RBM39. Interacts with SETX. Interacts with RBM15. Interacts with USH1G. Interacts with SDE2. Interacts with U2AF1. Interacts with CACTIN. Interacts with ZRSR1. Interacts with CYREN. Phosphorylated. Phosphorylation occurs concomitantly with the splicing catalytic steps. Phosphorylation on Thr-244, Thr-248 and Thr-313 by cyclin-dependent kinases promotes interaction with PPP1R8 during mitosis. In terms of processing, citrullinated by PADI4. In terms of tissue distribution, ubiquitous.

The protein resides in the nucleus. The protein localises to the nucleus speckle. In terms of biological role, component of the 17S U2 SnRNP complex of the spliceosome, a large ribonucleoprotein complex that removes introns from transcribed pre-mRNAs. The 17S U2 SnRNP complex (1) directly participates in early spliceosome assembly and (2) mediates recognition of the intron branch site during pre-mRNA splicing by promoting the selection of the pre-mRNA branch-site adenosine, the nucleophile for the first step of splicing. Within the 17S U2 SnRNP complex, SF3B1 is part of the SF3B subcomplex, which is required for 'A' complex assembly formed by the stable binding of U2 snRNP to the branchpoint sequence in pre-mRNA. Sequence independent binding of SF3A and SF3B subcomplexes upstream of the branch site is essential, it may anchor U2 snRNP to the pre-mRNA. May also be involved in the assembly of the 'E' complex. Also acts as a component of the minor spliceosome, which is involved in the splicing of U12-type introns in pre-mRNAs. Together with other U2 snRNP complex components may also play a role in the selective processing of microRNAs (miRNAs) from the long primary miRNA transcript, pri-miR-17-92. This chain is Splicing factor 3B subunit 1, found in Mus musculus (Mouse).